Here is a 352-residue protein sequence, read N- to C-terminus: MTIAVGRAPVERGWFDVLDDWLKRDRFVFIGWSGLLLFPCAFMALGGWLTGTTFVTSWYTHGLASSYLEGANFLTVAVSSPADAFGHSLLFLWGPEAQGNLTRWFQIGGLWPFVALHGAFGLIGFMLRQFEISRLVGIRPYNAIAFSGPIAVFVSVFLMYPLGQSSWFFAPSFGVAGIFRFILFLQGFHNWTLNPFHMMGVAGILGGALLCAIHGATVENTLFEDGEDSNTFRAFEPTQAEETYSMVTANRFWSQIFGIAFSNKRWLHFFMLFVPVTGLWMSSVGIVGLALNLRAYDFVSQELRAAEDPEFETFYTKNILLNEGMRAWMAPQDQPHENFIFPEEVLPRGNAL.

Residues 1–31 lie on the Cytoplasmic side of the membrane; sequence MTIAVGRAPVERGWFDVLDDWLKRDRFVFIG. A helical transmembrane segment spans residues 32–53; sequence WSGLLLFPCAFMALGGWLTGTT. Topologically, residues 54-108 are lumenal, thylakoid; sequence FVTSWYTHGLASSYLEGANFLTVAVSSPADAFGHSLLFLWGPEAQGNLTRWFQIG. A helical transmembrane segment spans residues 109-131; sequence GLWPFVALHGAFGLIGFMLRQFE. Residue His-117 participates in chlorophyll a binding. Residue Gln-129 participates in pheophytin a binding. The Cytoplasmic portion of the chain corresponds to 132–140; the sequence is ISRLVGIRP. The chain crosses the membrane as a helical span at residues 141–162; sequence YNAIAFSGPIAVFVSVFLMYPL. Asn-142 is a pheophytin a binding site. The Lumenal, thylakoid portion of the chain corresponds to 163–190; it reads GQSSWFFAPSFGVAGIFRFILFLQGFHN. Residues 191–217 traverse the membrane as a helical segment; that stretch reads WTLNPFHMMGVAGILGGALLCAIHGAT. His-197 lines the chlorophyll a pocket. Positions 214 and 261 each coordinate a plastoquinone. Fe cation is bound at residue His-214. The Cytoplasmic segment spans residues 218 to 265; that stretch reads VENTLFEDGEDSNTFRAFEPTQAEETYSMVTANRFWSQIFGIAFSNKR. The helical transmembrane segment at 266–288 threads the bilayer; sequence WLHFFMLFVPVTGLWMSSVGIVG. His-268 provides a ligand contact to Fe cation. Residues 289-352 are Lumenal, thylakoid-facing; sequence LALNLRAYDF…EEVLPRGNAL (64 aa).

This sequence belongs to the reaction center PufL/M/PsbA/D family. In terms of assembly, PSII is composed of 1 copy each of membrane proteins PsbA, PsbB, PsbC, PsbD, PsbE, PsbF, PsbH, PsbI, PsbJ, PsbK, PsbL, PsbM, PsbT, PsbX, PsbY, PsbZ, Psb30/Ycf12, peripheral proteins PsbO, CyanoQ (PsbQ), PsbU, PsbV and a large number of cofactors. It forms dimeric complexes. It depends on The D1/D2 heterodimer binds P680, chlorophylls that are the primary electron donor of PSII, and subsequent electron acceptors. It shares a non-heme iron and each subunit binds pheophytin, quinone, additional chlorophylls, carotenoids and lipids. There is also a Cl(-1) ion associated with D1 and D2, which is required for oxygen evolution. The PSII complex binds additional chlorophylls, carotenoids and specific lipids. as a cofactor.

It localises to the cellular thylakoid membrane. The catalysed reaction is 2 a plastoquinone + 4 hnu + 2 H2O = 2 a plastoquinol + O2. Functionally, photosystem II (PSII) is a light-driven water:plastoquinone oxidoreductase that uses light energy to abstract electrons from H(2)O, generating O(2) and a proton gradient subsequently used for ATP formation. It consists of a core antenna complex that captures photons, and an electron transfer chain that converts photonic excitation into a charge separation. The D1/D2 (PsbA/PsbD) reaction center heterodimer binds P680, the primary electron donor of PSII as well as several subsequent electron acceptors. D2 is needed for assembly of a stable PSII complex. The sequence is that of Photosystem II D2 protein from Synechocystis sp. (strain ATCC 27184 / PCC 6803 / Kazusa).